The sequence spans 354 residues: MTALKNDRFLRALLKQPVDVTPVWMMRQAGRYLPEYRASRAKAGDFMSLCMNPQFACEVTLQPLDRYPLDAAILFSDILTIPDAMGLGLYFETGEGPRFKKVISTPADIEALPVPDPQKDLGYVMDAVSTIRRELNGRVPLIGFSGSPWTLATYMVEGGSSKDFRKTKAMAYDNPQALHLLLDKLAQSVTSYLNGQILAGAQAVQIFDTWGGNLSAAAYQEFSLAYMRKIVSGLIREHEGRKVPVILFTKNGGLWLESIADAGADALGLDWTCEIGDARRRVGDKVALQGNMDPTVLYAKPEAIRKEVARILASYGHGTGHVFNLGHGITPEVDPEHAGVFINAVHELSAQYHQ.

Substrate-binding positions include 27–31, Asp-77, Tyr-154, Thr-209, and His-327; that span reads RQAGR.

This sequence belongs to the uroporphyrinogen decarboxylase family. As to quaternary structure, homodimer.

The protein resides in the cytoplasm. The catalysed reaction is uroporphyrinogen III + 4 H(+) = coproporphyrinogen III + 4 CO2. The protein operates within porphyrin-containing compound metabolism; protoporphyrin-IX biosynthesis; coproporphyrinogen-III from 5-aminolevulinate: step 4/4. Functionally, catalyzes the decarboxylation of four acetate groups of uroporphyrinogen-III to yield coproporphyrinogen-III. In Pseudomonas putida (strain ATCC 700007 / DSM 6899 / JCM 31910 / BCRC 17059 / LMG 24140 / F1), this protein is Uroporphyrinogen decarboxylase.